The sequence spans 559 residues: MFANMVSKLTSLQQELLSALLDSGVTKDVLLQALEDLDPSPSAFGVKLDSLQMSPSGSKLSDTDSKPVFHTLTNGHSKGKLSGDEGSEDGDDYDTPPILKELQSQNTEEAAEQRAEIERMLAEDPWRAARMIKGYMQQHNIPQREVVDVTGLNQSHLSQHLNKGTPMKTQKRAALYTWYVRKQREILRQFNQATQGSGATMLDKGNQDQVLLFFSEFSQSGQGMVQPGDDAAIEPACKKLRRNRFKWGPASQQILYQAYERQKNPSKEEREALVEECNRAECLQRGVSPSKAHGLGSNLVTEVRVYNWFANRRKEEAFRQKLAMDAYSGPAHSLNSLLSHSSPHHPQTSSSPPSKMQGVRYSQQGPGEVTSSTTINHHSSNAMSTSQSVLQQVSPGALDPSHSLLSPDAKMISVSGGGLPPVSTLTNIHASHHVHQQTPNLIMPLSGVMAIAQSLNTSQAQTVPVINSVAGSLAALQPVQFSQQLNSQHQQLMQQSSGHMSQQSFMASVSHSHMYPHKQEPPQYSHSSRFPPAMVVTDANSLSTLSSMSSSKQCPLQAW.

The tract at residues 1 to 35 is dimerization; the sequence is MFANMVSKLTSLQQELLSALLDSGVTKDVLLQALE. Positions 5–36 constitute an HNF-p1 domain; it reads MVSKLTSLQQELLSALLDSGVTKDVLLQALED. The interval 53–98 is disordered; sequence MSPSGSKLSDTDSKPVFHTLTNGHSKGKLSGDEGSEDGDDYDTPPI. Acidic residues predominate over residues 85–94; sequence EGSEDGDDYD. Positions 100–195 constitute a POU-specific atypical domain; it reads KELQSQNTEE…ILRQFNQATQ (96 aa). A DNA-binding region (homeobox; HNF1-type) is located at residues 240-320; that stretch reads LRRNRFKWGP…NRRKEEAFRQ (81 aa). 2 stretches are compositionally biased toward low complexity: residues 334–354 and 370–381; these read LNSLLSHSSPHHPQTSSSPPS and TSSTTINHHSSN. The segment at 334-384 is disordered; it reads LNSLLSHSSPHHPQTSSSPPSKMQGVRYSQQGPGEVTSSTTINHHSSNAMS.

The protein belongs to the HNF1 homeobox family. Binds DNA as a dimer. Can form homodimer or heterodimer with HNF1-alpha. In terms of tissue distribution, during embryonic development, expressed dynamically in the developing hindbrain, kidney (pronephros), gut, liver and pancreas; expressed in both intermediate mesoderm (precursor to the kidney) and the caudal hindbrain (including rhombomeres r5 and r6) at 10 hpf with expression diminishing caudally by 14 hpf. Strongly expressed in adult kidney, gut, liver and swim bladder; weakly expressed in brain, eye, testis, ovary and heart.

Its subcellular location is the nucleus. Functionally, transcription factor that binds to the inverted palindrome 5'-GTTAATNATTAAC-3'. Required for induction of rhombomere r5/r6 gene expression in the hindbrain. In Danio rerio (Zebrafish), this protein is Hepatocyte nuclear factor 1-beta-A (hnf1ba).